Consider the following 186-residue polypeptide: MADSTPVRMPRAPKLRASCDECGAAKLKCDRGHPSCGRCISLGLKCVYGVSRKAGKPRRDAQSATRPPPTPGDSGPPLDYNSFGPTSPPSSVGDGATLASGLLPGAADLSPLDWGPGSSSSYRAVVDLCSRYAKEPMRMDDTAMSSVWDGFLEPSLFATYGSPVQVARLAGGSVPFSAAPVRDLPI.

The zn(2)-C6 fungal-type DNA-binding region spans 19 to 46 (CDECGAAKLKCDRGHPSCGRCISLGLKC). The segment at 52–98 (RKAGKPRRDAQSATRPPPTPGDSGPPLDYNSFGPTSPPSSVGDGATL) is disordered.

It localises to the nucleus. Transcription factor that specifically regulates the expression of the pgm gene cluster that mediates the biosynthesis of cryptic naphthoquinones derived pigments responsible for the coloration of the fruiting bodies. The polypeptide is Transcription factor pgmR (Aspergillus terreus (strain NIH 2624 / FGSC A1156)).